Consider the following 618-residue polypeptide: 1-deoxy-D-xylulose-5-phosphate synthase (618 aa).

Residues His-72 and 113–115 (GHA) contribute to the thiamine diphosphate site. Position 144 (Asp-144) interacts with Mg(2+). Thiamine diphosphate contacts are provided by residues 145–146 (GA), Asn-173, His-284, and Glu-359. Residue Asn-173 coordinates Mg(2+).

It belongs to the transketolase family. DXPS subfamily. Homodimer. The cofactor is Mg(2+). Thiamine diphosphate is required as a cofactor.

It carries out the reaction D-glyceraldehyde 3-phosphate + pyruvate + H(+) = 1-deoxy-D-xylulose 5-phosphate + CO2. It participates in metabolic intermediate biosynthesis; 1-deoxy-D-xylulose 5-phosphate biosynthesis; 1-deoxy-D-xylulose 5-phosphate from D-glyceraldehyde 3-phosphate and pyruvate: step 1/1. In terms of biological role, catalyzes the acyloin condensation reaction between C atoms 2 and 3 of pyruvate and glyceraldehyde 3-phosphate to yield 1-deoxy-D-xylulose-5-phosphate (DXP). This chain is 1-deoxy-D-xylulose-5-phosphate synthase, found in Dictyoglomus turgidum (strain DSM 6724 / Z-1310).